We begin with the raw amino-acid sequence, 1321 residues long: Probable serine/threonine-protein kinase fnkE (1321 aa).

FNIP repeat units follow at residues 108-149, 150-191, 192-233, and 255-296; these read YNQL…NLSS, YNQP…DLSS, YNKL…DLSS, and YNKL…DISS. Positions 295–595 constitute a Protein kinase 1 domain; that stretch reads SSYNQLLTPG…YNYVIKDSIM (301 aa). Residues 301–309 and lysine 325 contribute to the ATP site; that span reads LTPGTLSNN. Aspartate 465 serves as the catalytic Proton acceptor. FNIP repeat units follow at residues 654–696 and 741–783; these read FNHP…FNKF and FNQP…LGSN. One can recognise a Protein kinase 2 domain in the interval 860-1128; it reads WEIISTLGSG…EGDSVFEKYL (269 aa). ATP contacts are provided by residues 866–874 and lysine 895; that span reads LGSGNFGKV. Aspartate 990 (proton acceptor) is an active-site residue. FNIP repeat units lie at residues 1160-1202 and 1224-1268; these read YNQM…LGNE and FNFT…LGSN.

It belongs to the protein kinase superfamily. STE Ser/Thr protein kinase family. It depends on Mg(2+) as a cofactor.

The catalysed reaction is L-seryl-[protein] + ATP = O-phospho-L-seryl-[protein] + ADP + H(+). The enzyme catalyses L-threonyl-[protein] + ATP = O-phospho-L-threonyl-[protein] + ADP + H(+). This Dictyostelium discoideum (Social amoeba) protein is Probable serine/threonine-protein kinase fnkE.